We begin with the raw amino-acid sequence, 191 residues long: Peptidyl-tRNA hydrolase (191 aa).

Residue Y14 coordinates tRNA. H19 (proton acceptor) is an active-site residue. The tRNA site is built by Y64, N66, and N112.

It belongs to the PTH family. In terms of assembly, monomer.

The protein resides in the cytoplasm. It catalyses the reaction an N-acyl-L-alpha-aminoacyl-tRNA + H2O = an N-acyl-L-amino acid + a tRNA + H(+). Functionally, hydrolyzes ribosome-free peptidyl-tRNAs (with 1 or more amino acids incorporated), which drop off the ribosome during protein synthesis, or as a result of ribosome stalling. In terms of biological role, catalyzes the release of premature peptidyl moieties from peptidyl-tRNA molecules trapped in stalled 50S ribosomal subunits, and thus maintains levels of free tRNAs and 50S ribosomes. The chain is Peptidyl-tRNA hydrolase from Clostridium botulinum (strain Eklund 17B / Type B).